Here is a 247-residue protein sequence, read N- to C-terminus: Acetate transporter protein patA (247 aa).

A glycan (N-linked (GlcNAc...) asparagine) is linked at Asn-20. 6 helical membrane passes run 37–57 (PPITPIGSPTALGMGAFAIAF), 71–91 (AITNAYIGNCFFTAGLGLVLV), 106–126 (VFGGFGLFNLAFGAINAPAFG), 141–161 (ALGYFLLVWGVFVLFFTIAAM), 169–189 (AMLGTSQITYTLLAASYFAMA), and 202–222 (AAGAFGFVSGLLAWYVVAHLM).

The protein belongs to the acetate uptake transporter (AceTr) (TC 2.A.96) family.

The protein localises to the endoplasmic reticulum membrane. Its pathway is mycotoxin biosynthesis; patulin biosynthesis. Functionally, acetate transporter protein; part of the gene cluster that mediates the biosynthesis of patulin, an acetate-derived tetraketide mycotoxin produced by several fungal species that shows antimicrobial properties against several bacteria. May be involved in the uptake of acetate, a substrate for the synthesis of 6-methylsalicylic acid by the polyketide synthase patK. The chain is Acetate transporter protein patA from Aspergillus clavatus (strain ATCC 1007 / CBS 513.65 / DSM 816 / NCTC 3887 / NRRL 1 / QM 1276 / 107).